We begin with the raw amino-acid sequence, 340 residues long: MTIINSRIIDIRQSTFEESIPDQVTAGLSTTPKTLPALLFYSGEGIRHWIEHSTAADFYPRHEELRILRARAAEMVDSIANNSVVVDLGSASLDKVLPLLEALEASKKNITFYALDLSFSELQSTLQSLPYEQFKFVKIGALHGTFEDGVQWLKDTPGVQDRPHCLLLFGLTVGNYSRPNAAKFLQNIASNALAASPVQSSILLSLDSCKMPTKVLRAYTAEGVVPFALASLDYGNTLFAPNKMGEKVFQPSDWYFLSEWNYMLGRHEASLITKGKEVRLGGPLNDIVIEKHEKIRFGCSYKYDTDERQVLFGSAGLTDVKEWSVEGCDVSFYQLQMCPN.

The protein belongs to the methyltransferase superfamily. As to quaternary structure, homodimer.

The enzyme catalyses 4-(3-methylbut-2-enyl)-L-tryptophan + S-adenosyl-L-methionine = 4-(3-methylbut-2-enyl)-L-abrine + S-adenosyl-L-homocysteine + H(+). Its pathway is alkaloid biosynthesis; ergot alkaloid biosynthesis. In terms of biological role, 4-dimethylallyltryptophan N-methyltransferase; part of the gene cluster that mediates the biosynthesis of isofumigaclavines, fungal ergot alkaloids. The tryptophan dimethylallyltransferase ifgA catalyzes the first step of ergot alkaloid biosynthesis by condensing dimethylallyl diphosphate (DMAP) and tryptophan to form 4-dimethylallyl-L-tryptophan. The second step is catalyzed by the methyltransferase ifgB that methylates 4-dimethylallyl-L-tryptophan in the presence of S-adenosyl-L-methionine, resulting in the formation of N-methyl-dimethylallyl-L-tryptophan. The catalase ifgD and the FAD-dependent oxidoreductase ifgC then transform N-methyl-dimethylallyl-L-tryptophan to chanoclavine-I which is further oxidized by ifgE in the presence of NAD(+), resulting in the formation of chanoclavine-I aldehyde. The chanoclavine-I aldehyde reductases ifgG and/or fgaOx3 reduce chanoclavine-I aldehyde to dihydrochanoclavine-I aldehyde that spontaneously dehydrates to form 6,8-dimethyl-6,7-didehydroergoline. The festuclavine dehydrogenases ifgF1 and/or ifgF2 then catalyze the reduction of 6,8-dimethyl-6,7-didehydroergoline to form festuclavine. Hydrolysis of festuclavine by a yet undetermined cytochrome P450 monooxygenase (called ifgH) then leads to the formation of isofumigaclavine B which is in turn acetylated by ifgI to isofumigaclavine A. Penicillium roqueforti has interestingly at least two sets of genes for the consumption of chanoclavine-I aldehyde on three different loci, the OYEs ifgG/fgaOx3 and the festuclavine synthase homologs ifgF1/ifgF2. The reason for the duplication of these genes is unclear, probably to ensure the conversion of chanoclavine-I aldehyde by differential gene expression under various environmental conditions. This chain is 4-dimethylallyltryptophan N-methyltransferase ifgB, found in Penicillium roqueforti (strain FM164).